We begin with the raw amino-acid sequence, 545 residues long: Threonine--tRNA ligase catalytic subunit (545 aa).

The segment at 139 to 433 (DHRLIGEKLD…LLEHFKGKLP (295 aa)) is catalytic. Zn(2+) is bound by residues cysteine 231, histidine 282, and histidine 410.

It belongs to the class-II aminoacyl-tRNA synthetase family. In terms of assembly, homodimer. Probably interacts with its editing subunit. It depends on Zn(2+) as a cofactor.

The protein resides in the cytoplasm. The catalysed reaction is tRNA(Thr) + L-threonine + ATP = L-threonyl-tRNA(Thr) + AMP + diphosphate + H(+). Its function is as follows. Catalyzes the attachment of threonine to tRNA(Thr) in a two-step reaction: L-threonine is first activated by ATP to form Thr-AMP and then transferred to the acceptor end of tRNA(Thr). Also activates L-serine and transfers it to tRNA(Thr) but cannot deacylate incorrectly charged amino acid; unlike most archaea the editing function is found in a freestanding protein. This Saccharolobus islandicus (strain M.16.27) (Sulfolobus islandicus) protein is Threonine--tRNA ligase catalytic subunit.